We begin with the raw amino-acid sequence, 318 residues long: Methionyl-tRNA formyltransferase (318 aa).

112-115 (SILP) contributes to the (6S)-5,6,7,8-tetrahydrofolate binding site.

It belongs to the Fmt family.

The catalysed reaction is L-methionyl-tRNA(fMet) + (6R)-10-formyltetrahydrofolate = N-formyl-L-methionyl-tRNA(fMet) + (6S)-5,6,7,8-tetrahydrofolate + H(+). Functionally, attaches a formyl group to the free amino group of methionyl-tRNA(fMet). The formyl group appears to play a dual role in the initiator identity of N-formylmethionyl-tRNA by promoting its recognition by IF2 and preventing the misappropriation of this tRNA by the elongation apparatus. The protein is Methionyl-tRNA formyltransferase of Shewanella putrefaciens (strain CN-32 / ATCC BAA-453).